Here is a 222-residue protein sequence, read N- to C-terminus: Small ribosomal subunit protein uS2 (222 aa).

The protein belongs to the universal ribosomal protein uS2 family.

The protein is Small ribosomal subunit protein uS2 of Karelsulcia muelleri (strain GWSS) (Sulcia muelleri).